The following is an 840-amino-acid chain: DNA mismatch repair protein MutS (840 aa).

601–608 (GPNMSGKS) contacts ATP.

This sequence belongs to the DNA mismatch repair MutS family.

Its function is as follows. This protein is involved in the repair of mismatches in DNA. It is possible that it carries out the mismatch recognition step. This protein has a weak ATPase activity. This is DNA mismatch repair protein MutS from Lactococcus lactis subsp. cremoris (strain MG1363).